Here is a 329-residue protein sequence, read N- to C-terminus: D-alanine--D-alanine ligase (329 aa).

One can recognise an ATP-grasp domain in the interval 120-326 (KLWYDALDIP…FHEFLEDCIN (207 aa)). 150–205 (AFEKWGKVFVKAARQGSSVGCYSVAEKQAIAKAVNDAFGYSDQVLVEKAVKPRELE) is an ATP binding site. Mg(2+)-binding residues include aspartate 280, glutamate 293, and asparagine 295.

The protein belongs to the D-alanine--D-alanine ligase family. The cofactor is Mg(2+). Mn(2+) is required as a cofactor.

The protein resides in the cytoplasm. It carries out the reaction 2 D-alanine + ATP = D-alanyl-D-alanine + ADP + phosphate + H(+). It participates in cell wall biogenesis; peptidoglycan biosynthesis. In terms of biological role, cell wall formation. This chain is D-alanine--D-alanine ligase, found in Vibrio parahaemolyticus serotype O3:K6 (strain RIMD 2210633).